The primary structure comprises 941 residues: Isoleucine--tRNA ligase (941 aa).

Residues 58–68 carry the 'HIGH' region motif; sequence PYANGNIHIGH. Residue Glu-564 coordinates L-isoleucyl-5'-AMP. Residues 605–609 carry the 'KMSKS' region motif; it reads KMSKS. Position 608 (Lys-608) interacts with ATP. Zn(2+)-binding residues include Cys-904, Cys-907, Cys-924, and Cys-927.

The protein belongs to the class-I aminoacyl-tRNA synthetase family. IleS type 1 subfamily. As to quaternary structure, monomer. Zn(2+) is required as a cofactor.

It localises to the cytoplasm. The catalysed reaction is tRNA(Ile) + L-isoleucine + ATP = L-isoleucyl-tRNA(Ile) + AMP + diphosphate. Its function is as follows. Catalyzes the attachment of isoleucine to tRNA(Ile). As IleRS can inadvertently accommodate and process structurally similar amino acids such as valine, to avoid such errors it has two additional distinct tRNA(Ile)-dependent editing activities. One activity is designated as 'pretransfer' editing and involves the hydrolysis of activated Val-AMP. The other activity is designated 'posttransfer' editing and involves deacylation of mischarged Val-tRNA(Ile). The polypeptide is Isoleucine--tRNA ligase (Buchnera aphidicola subsp. Cinara cedri (strain Cc)).